A 357-amino-acid chain; its full sequence is Ribosomal RNA large subunit methyltransferase M (357 aa).

Residues serine 183, 216-219 (APGG), aspartate 235, aspartate 255, and aspartate 271 each bind S-adenosyl-L-methionine. The active-site Proton acceptor is lysine 300.

The protein belongs to the class I-like SAM-binding methyltransferase superfamily. RNA methyltransferase RlmE family. RlmM subfamily. Monomer.

It localises to the cytoplasm. It catalyses the reaction cytidine(2498) in 23S rRNA + S-adenosyl-L-methionine = 2'-O-methylcytidine(2498) in 23S rRNA + S-adenosyl-L-homocysteine + H(+). Functionally, catalyzes the 2'-O-methylation at nucleotide C2498 in 23S rRNA. This is Ribosomal RNA large subunit methyltransferase M from Pseudomonas savastanoi pv. phaseolicola (strain 1448A / Race 6) (Pseudomonas syringae pv. phaseolicola (strain 1448A / Race 6)).